The primary structure comprises 204 residues: Recombination protein RecR (204 aa).

The C4-type zinc finger occupies 63 to 78 (CNRCFNITVEDPCTIC). A Toprim domain is found at 86-181 (RQVCVVEEPL…RVTRLARGLP (96 aa)).

Belongs to the RecR family.

Its function is as follows. May play a role in DNA repair. It seems to be involved in an RecBC-independent recombinational process of DNA repair. It may act with RecF and RecO. The chain is Recombination protein RecR from Herpetosiphon aurantiacus (strain ATCC 23779 / DSM 785 / 114-95).